Reading from the N-terminus, the 429-residue chain is MSYLFTSESVSEGHPDKVSDQISDAILDQFLATDPDSKVACETLVTTGQVVLAGEVKSRSYVDVQETARRVIEKIGYTKSEYGFDARSCGIFSSIHGQSADINRGVDRSDRSEQGAGDQGMMFGYATNETENYMPLTVDLAHHLLYELATIRKEPSSPMPYLRPDAKSQVTIEHDDEGRPVRIDTIVISTQHDEFVQASDGISEAEADRMMQERIHHDIATILIPRVKMLYKPEIAALFDEKVRLFVNPTGKFVIGGPHGDTGLTGRKIIVDTYGGRASHGGGAFSGKDPSKVDRSAAYAARHIAKNMVAAGVADEMLVQVAYAIGVAEPVSIYVNTKGRSHVALSDGQIAEKIKKIFDMRPYAIEQRLKLRNPIYEETAAYGHFGREPYEAYKTFVDEHGTEQMRIVELFTWEKLDYVNKIKAEFGLS.

Residue H14 participates in ATP binding. Residue D16 participates in Mg(2+) binding. E42 contributes to the K(+) binding site. L-methionine contacts are provided by E55 and Q98. Positions 98–108 are flexible loop; sequence QSADINRGVDR. ATP-binding positions include 165–167, 252–253, D261, 267–268, A284, and K288; these read DAK, KF, and RK. Position 261 (D261) interacts with L-methionine. K292 contributes to the L-methionine binding site.

The protein belongs to the AdoMet synthase family. Homotetramer; dimer of dimers. It depends on Mg(2+) as a cofactor. K(+) is required as a cofactor.

The protein resides in the cytoplasm. It carries out the reaction L-methionine + ATP + H2O = S-adenosyl-L-methionine + phosphate + diphosphate. It functions in the pathway amino-acid biosynthesis; S-adenosyl-L-methionine biosynthesis; S-adenosyl-L-methionine from L-methionine: step 1/1. In terms of biological role, catalyzes the formation of S-adenosylmethionine (AdoMet) from methionine and ATP. The overall synthetic reaction is composed of two sequential steps, AdoMet formation and the subsequent tripolyphosphate hydrolysis which occurs prior to release of AdoMet from the enzyme. The sequence is that of S-adenosylmethionine synthase from Porphyromonas gingivalis (strain ATCC 33277 / DSM 20709 / CIP 103683 / JCM 12257 / NCTC 11834 / 2561).